The following is a 1377-amino-acid chain: Carboxypeptidase D (1377 aa).

The signal sequence occupies residues 1 to 37 (MASGRDERPPWRLGRLRLLPPPPLLLLLLLLRSSAQA). At 38-1296 (AHIKKAEATT…DNRIFGLPRE (1259 aa)) the chain is on the extracellular side. The region spanning 62-379 (HYYHEAALGE…ESLITLIEKV (318 aa)) is the Peptidase M14 1 domain. Positions 138 and 141 each coordinate Zn(2+). The short motif at 161–163 (RGD) is the Cell attachment site element. Asn-171 and Asn-216 each carry an N-linked (GlcNAc...) asparagine glycan. The tract at residues 188-231 (RAREGDCGLGDSGPPGTSGRDNSRGRDLNRSFPDQFSTGEPPSL) is disordered. His-256 is a Zn(2+) binding site. Position 264 is a phosphotyrosine (Tyr-264). Ser-269 bears the Phosphoserine mark. Glu-349 serves as the catalytic Proton donor/acceptor. 4 N-linked (GlcNAc...) asparagine glycosylation sites follow: Asn-398, Asn-409, Asn-428, and Asn-521. Residues 501-791 (HHHHFPDMEI…RSLIQFMKQV (291 aa)) form the Peptidase M14 2 domain. 2 residues coordinate Zn(2+): His-563 and Glu-566. Asn-625 carries an N-linked (GlcNAc...) asparagine glycan. His-670 is a Zn(2+) binding site. The Proton donor/acceptor role is filled by Glu-761. Asn-810, Asn-854, Asn-866, Asn-878, Asn-952, and Asn-975 each carry an N-linked (GlcNAc...) asparagine glycan. A disordered region spans residues 874–898 (ADANNESKKGRGHSTSTDDTSDPTS). Residues 929–1208 (RYHSYKDLSE…KSLLSMLVEV (280 aa)) form the Peptidase M14 3 domain. Residues 1038 to 1047 (RERAQEKDCT) show a composition bias toward basic and acidic residues. A disordered region spans residues 1038–1064 (RERAQEKDCTSKTGHTNAHGKDLDTDF). Asn-1067 and Asn-1139 each carry an N-linked (GlcNAc...) asparagine glycan. The chain crosses the membrane as a helical span at residues 1297-1317 (LVVTVSGATMSALILTACIIW). S-palmitoyl cysteine attachment occurs at residues Cys-1314, Cys-1318, and Cys-1320. Residues 1318-1377 (CICSIKSNRHKDGFHRLRQHHDEYEDEIRMMSTGSKKSLLSHEFQDETDTEEETLYSSKH) are Cytoplasmic-facing. Phosphoserine occurs at positions 1355 and 1358. Residues 1356–1377 (LLSHEFQDETDTEEETLYSSKH) form a disordered region. Phosphothreonine is present on residues Thr-1365 and Thr-1367.

Belongs to the peptidase M14 family. Zn(2+) serves as cofactor.

The protein resides in the cell membrane. It catalyses the reaction Releases C-terminal Arg and Lys from polypeptides.. The polypeptide is Carboxypeptidase D (Cpd) (Mus musculus (Mouse)).